Reading from the N-terminus, the 225-residue chain is NAD(P)H-quinone oxidoreductase subunit K, chloroplastic (225 aa).

[4Fe-4S] cluster is bound by residues cysteine 43, cysteine 44, cysteine 108, and cysteine 139.

This sequence belongs to the complex I 20 kDa subunit family. In terms of assembly, NDH is composed of at least 16 different subunits, 5 of which are encoded in the nucleus. Requires [4Fe-4S] cluster as cofactor.

Its subcellular location is the plastid. The protein localises to the chloroplast thylakoid membrane. It catalyses the reaction a plastoquinone + NADH + (n+1) H(+)(in) = a plastoquinol + NAD(+) + n H(+)(out). The catalysed reaction is a plastoquinone + NADPH + (n+1) H(+)(in) = a plastoquinol + NADP(+) + n H(+)(out). NDH shuttles electrons from NAD(P)H:plastoquinone, via FMN and iron-sulfur (Fe-S) centers, to quinones in the photosynthetic chain and possibly in a chloroplast respiratory chain. The immediate electron acceptor for the enzyme in this species is believed to be plastoquinone. Couples the redox reaction to proton translocation, and thus conserves the redox energy in a proton gradient. In Dioscorea elephantipes (Elephant's foot yam), this protein is NAD(P)H-quinone oxidoreductase subunit K, chloroplastic.